Consider the following 514-residue polypeptide: Voltage-gated potassium channel regulatory subunit KCNG1 (514 aa).

Over 1-224 (MTLLPGDNSH…DMVERPHSGL (224 aa)) the chain is Cytoplasmic. Acidic residues predominate over residues 180–196 (MEREEEEEPLDSEDQES). A disordered region spans residues 180–205 (MEREEEEEPLDSEDQESEGPSASEGR). A helical transmembrane segment spans residues 225 to 246 (PGKVFACLSVLFVTVTAVNLSV). At 247–267 (STLPSLREEEEQGQCSQMCHN) the chain is on the extracellular side. Residues 268-289 (VFIVESVCVGWFSLEFLLRFIQ) traverse the membrane as a helical segment. The Cytoplasmic portion of the chain corresponds to 290–300 (APSKFAFLRSP). Residues 301–321 (LTLIDLVAILPYYVTLLVDGA) form a helical membrane-spanning segment. Residues 322–338 (ASSRRKPSTGNSYLDKV) lie on the Extracellular side of the membrane. Residues 339–359 (GLVLRVLRALRILYVMRLARH) form a helical; Voltage-sensor membrane-spanning segment. At 360–374 (SLGLQTLGLTARRCT) the chain is on the cytoplasmic side. The chain crosses the membrane as a helical span at residues 375–396 (REFGLLLLFLCVAIALFAPLLY). Over 397–411 (VIENEMADSPEFTSI) the chain is Extracellular. An intramembrane region (helical) is located at residues 412–423 (PACYWWAVITMT). The Selectivity filter signature appears at 424–429 (TVGYGD). Residues 424 to 431 (TVGYGDMV) lie within the membrane without spanning it. Residues 432 to 438 (PRSTPGQ) lie on the Extracellular side of the membrane. Residues 439-467 (VVALSSILSGILLMAFPVTSIFHTFSRSY) traverse the membrane as a helical segment. Residues 468-514 (LELKQEQERVLIRRAQYLIKTKSQLSGMSQDSDILFGSASSDTRDNN) lie on the Cytoplasmic side of the membrane.

Belongs to the potassium channel family. G (TC 1.A.1.2) subfamily. Kv6.1/KCNG1 sub-subfamily. In terms of assembly, heterotetramer with KCNB1 or KCNB2.

It localises to the cell membrane. Its function is as follows. Regulatory alpha-subunit of the voltage-gated potassium (Kv) channel which, when coassembled with KCNB1 or KCNB2, can modulate their expression and their gating kinetics by acting on deactivation upon repolarization and inactivation during maintained depolarization. Potassium channel subunit that does not form functional channels by itself. The chain is Voltage-gated potassium channel regulatory subunit KCNG1 from Mus musculus (Mouse).